Here is a 263-residue protein sequence, read N- to C-terminus: uncharacterized protein (263 aa).

The stretch at 72 to 168 (LDKKETKELS…RTIVEIRNTK (97 aa)) forms a coiled coil. Positions 76-158 (ETKELSKKEK…EKKEKKEKED (83 aa)) are disordered. The segment covering 83 to 95 (KEKKQLKKEKKAL) has biased composition (basic residues). A compositionally biased stretch (basic and acidic residues) spans 96–107 (KKENKGGKDKKD). A compositionally biased stretch (basic residues) spans 108 to 121 (KKDKKDKKDKKDKK). Basic and acidic residues-rich tracts occupy residues 122–131 (DKKDKGDKKD) and 139–158 (KHDD…EKED).

This is an uncharacterized protein from Dictyostelium discoideum (Social amoeba).